Consider the following 255-residue polypeptide: Menaquinone reductase, iron-sulfur cluster-binding subunit (255 aa).

4Fe-4S ferredoxin-type domains follow at residues tryptophan 11 to aspartate 41, histidine 66 to glutamate 97, and glycine 99 to phenylalanine 128. Residues cysteine 20, cysteine 23, cysteine 26, cysteine 30, cysteine 75, cysteine 78, cysteine 83, cysteine 87, cysteine 108, cysteine 111, cysteine 114, and cysteine 118 each coordinate [4Fe-4S] cluster. [3Fe-4S] cluster contacts are provided by cysteine 155, cysteine 158, cysteine 188, and cysteine 192.

In terms of assembly, the Qrc complex is composed of four subunits: QrcA, QrcB, QrcC and QrcD. Can form a supercomplex with the [NiFe] hydrogenase HynA1 and the tetraheme Type I cytochrome c3 TpIc(3), its physiological electron donors. It depends on [4Fe-4S] cluster as a cofactor. The cofactor is [3Fe-4S] cluster.

The protein resides in the periplasm. Component of the respiratory Qrc complex, that catalyzes the reduction of the menaquinone pool using electrons transferred from the reduced periplasmic cytochrome c3, and which is probably involved in sulfate respiration. Is likely essential for growth on H(2) or formate since the periplasmic hydrogenases and/or formate dehydrogenases act as primary electron donors for the Qrc complex. QrcC is an electron-transferring subunit; its cubane iron sulfur clusters form a pathway for electron transfer between the hemes of QrcA and the membrane quinone pool. This Nitratidesulfovibrio vulgaris (strain ATCC 29579 / DSM 644 / CCUG 34227 / NCIMB 8303 / VKM B-1760 / Hildenborough) (Desulfovibrio vulgaris) protein is Menaquinone reductase, iron-sulfur cluster-binding subunit.